We begin with the raw amino-acid sequence, 324 residues long: HPr kinase/phosphorylase (324 aa).

Active-site residues include H146 and K167. 161–168 contacts ATP; that stretch reads GDSGLGKS. A Mg(2+)-binding site is contributed by S168. The Proton acceptor; for phosphorylation activity. Proton donor; for dephosphorylation activity role is filled by D185. The tract at residues 209–218 is important for the catalytic mechanism of both phosphorylation and dephosphorylation; that stretch reads LEVRGLGLLD. E210 provides a ligand contact to Mg(2+). Residue R250 is part of the active site. The tract at residues 271-276 is important for the catalytic mechanism of dephosphorylation; that stretch reads QVAAGR.

Belongs to the HPrK/P family. As to quaternary structure, homohexamer. Mg(2+) serves as cofactor.

It catalyses the reaction [HPr protein]-L-serine + ATP = [HPr protein]-O-phospho-L-serine + ADP + H(+). The catalysed reaction is [HPr protein]-O-phospho-L-serine + phosphate + H(+) = [HPr protein]-L-serine + diphosphate. Catalyzes the ATP- as well as the pyrophosphate-dependent phosphorylation of a specific serine residue in HPr, a phosphocarrier protein of the phosphoenolpyruvate-dependent sugar phosphotransferase system (PTS). HprK/P also catalyzes the pyrophosphate-producing, inorganic phosphate-dependent dephosphorylation (phosphorolysis) of seryl-phosphorylated HPr (P-Ser-HPr). This is HPr kinase/phosphorylase from Ralstonia nicotianae (strain ATCC BAA-1114 / GMI1000) (Ralstonia solanacearum).